We begin with the raw amino-acid sequence, 146 residues long: Angiogenin (146 aa).

The first 24 residues, Met1–Ala24, serve as a signal peptide directing secretion. Position 25 is a pyrrolidone carboxylic acid (Gln25). The active-site Proton acceptor is His37. Arg45 is a tRNA binding site. Disulfide bonds link Cys50-Cys105, Cys63-Cys116, and Cys81-Cys131. A Nucleolar localization signal motif is present at residues Arg55–Leu59. Cys105 and Ile127 together coordinate tRNA. His138 functions as the Proton donor in the catalytic mechanism.

It belongs to the pancreatic ribonuclease family. Homodimer. Interacts with RNH1; inhibiting ANG ribonuclease activity. Interacts with PCNA.

The protein localises to the secreted. It localises to the nucleus. The protein resides in the nucleolus. It is found in the cytoplasm. Its subcellular location is the stress granule. Its activity is regulated as follows. Has weak tRNA ribonuclease activity by itself due to partial autoinhibition by its C-terminus, which folds into a short alpha-helix that partially occludes the substrate-binding site. In absence of stress, the ribonuclease activity is inhibited by RNH1 in the cytoplasm. In response to stress, dissociates from RNH1 in the cytoplasm and associates with cytoplasmic ribosomes with vacant A-sites: ribosomes directly activate the tRNA ribonuclease activity of ANG by refolding the C-terminal alpha-helix. In response to stress, the angiogenic activity of ANG is inhibited by RNH1 in the nucleus. Its function is as follows. Secreted ribonuclease that can either promote or restrict cell proliferation of target cells, depending on the context. Endocytosed in target cells via its receptor PLXNB2 and translocates to the cytoplasm or nucleus. Under stress conditions, localizes to the cytoplasm and promotes the assembly of stress granules (SGs): specifically cleaves a subset of tRNAs within anticodon loops to produce tRNA-derived stress-induced fragments (tiRNAs), resulting in translation repression and inhibition of cell proliferation. tiRNas also prevent formation of apoptosome, thereby promoting cell survival. Preferentially cleaves RNAs between a pyrimidine and an adenosine residue, suggesting that it cleaves the anticodon loop of tRNA(Ala) (32-UUAGCAU-38) after positions 33 and 36. Cleaves a subset of tRNAs, including tRNA(Ala), tRNA(Glu), tRNA(Gly), tRNA(Lys), tRNA(Val), tRNA(His), tRNA(Asp) and tRNA(Sec). Under growth conditions and in differentiated cells, translocates to the nucleus and stimulates ribosomal RNA (rRNA) transcription, including that containing the initiation site sequences of 45S rRNA, thereby promoting cell growth and proliferation. Angiogenin induces vascularization of normal and malignant tissues via its ability to promote rRNA transcription. Involved in hematopoietic stem and progenitor cell (HSPC) growth and survival by promoting rRNA transcription in growth conditions and inhibiting translation in response to stress, respectively. Mediates the crosstalk between myeloid and intestinal epithelial cells to protect the intestinal epithelial barrier integrity: secreted by myeloid cells and promotes intestinal epithelial cells proliferation and survival. Also mediates osteoclast-endothelial cell crosstalk in growing bone: produced by osteoclasts and protects the neighboring vascular cells against senescence by promoting rRNA transcription. In Trachypithecus francoisi (Francois' leaf monkey), this protein is Angiogenin (ANG).